A 176-amino-acid chain; its full sequence is ATP synthase subunit b (176 aa).

A helical membrane pass occupies residues 24 to 43; the sequence is FAFRVVNFVIFAGIIWKAAG.

Belongs to the ATPase B chain family. F-type ATPases have 2 components, F(1) - the catalytic core - and F(0) - the membrane proton channel. F(1) has five subunits: alpha(3), beta(3), gamma(1), delta(1), epsilon(1). F(0) has three main subunits: a(1), b(2) and c(10-14). The alpha and beta chains form an alternating ring which encloses part of the gamma chain. F(1) is attached to F(0) by a central stalk formed by the gamma and epsilon chains, while a peripheral stalk is formed by the delta and b chains.

The protein localises to the cell inner membrane. In terms of biological role, f(1)F(0) ATP synthase produces ATP from ADP in the presence of a proton or sodium gradient. F-type ATPases consist of two structural domains, F(1) containing the extramembraneous catalytic core and F(0) containing the membrane proton channel, linked together by a central stalk and a peripheral stalk. During catalysis, ATP synthesis in the catalytic domain of F(1) is coupled via a rotary mechanism of the central stalk subunits to proton translocation. Component of the F(0) channel, it forms part of the peripheral stalk, linking F(1) to F(0). This chain is ATP synthase subunit b, found in Nitratidesulfovibrio vulgaris (strain ATCC 29579 / DSM 644 / CCUG 34227 / NCIMB 8303 / VKM B-1760 / Hildenborough) (Desulfovibrio vulgaris).